A 413-amino-acid chain; its full sequence is Tubby-like F-box protein 6 (413 aa).

Residues 67-122 enclose the F-box domain; the sequence is SIWVDLPPELLLDIIQRIESEQSLWPGRRDVVACASVCKSWREMTKEVVKVPELSG.

Belongs to the TUB family. In terms of tissue distribution, ubiquitous, with higher levels in flowers.

The polypeptide is Tubby-like F-box protein 6 (Arabidopsis thaliana (Mouse-ear cress)).